Here is a 442-residue protein sequence, read N- to C-terminus: ATP-dependent RNA helicase SUB2-2 (442 aa).

The short motif at 58–86 (TGFKDFLLKPELARAIIDCGFEHPSEVQQ) is the Q motif element. In terms of domain architecture, Helicase ATP-binding spans 89-264 (IPQSIHGTDV…RRFLQNPLEI (176 aa)). Residue 102–109 (AKSGLGKT) coordinates ATP. Positions 211–214 (DECD) match the DECD box motif. The Helicase C-terminal domain occupies 292 to 437 (KLAQLLDDLE…EFPEEGIDPS (146 aa)).

Belongs to the DEAD box helicase family. DECD subfamily.

It localises to the nucleus. The enzyme catalyses ATP + H2O = ADP + phosphate + H(+). Functionally, ATP-binding RNA helicase involved in transcription elongation and required for the export of mRNA out of the nucleus. SUB2 also plays a role in pre-mRNA splicing and spliceosome assembly. May be involved in rDNA and telomeric silencing, and maintenance of genome integrity. This chain is ATP-dependent RNA helicase SUB2-2 (SUB2-2), found in Vanderwaltozyma polyspora (strain ATCC 22028 / DSM 70294 / BCRC 21397 / CBS 2163 / NBRC 10782 / NRRL Y-8283 / UCD 57-17) (Kluyveromyces polysporus).